The primary structure comprises 406 residues: Argininosuccinate synthase (406 aa).

Residues 12-20 (AYSGGLDTS) and A39 each bind ATP. Residues Y90 and S95 each coordinate L-citrulline. Residue G120 participates in ATP binding. 3 residues coordinate L-aspartate: T122, N126, and D127. N126 is an L-citrulline binding site. L-citrulline contacts are provided by R130, S179, S188, E264, and Y276.

Belongs to the argininosuccinate synthase family. Type 1 subfamily. In terms of assembly, homotetramer.

Its subcellular location is the cytoplasm. It carries out the reaction L-citrulline + L-aspartate + ATP = 2-(N(omega)-L-arginino)succinate + AMP + diphosphate + H(+). It functions in the pathway amino-acid biosynthesis; L-arginine biosynthesis; L-arginine from L-ornithine and carbamoyl phosphate: step 2/3. This Geotalea daltonii (strain DSM 22248 / JCM 15807 / FRC-32) (Geobacter daltonii) protein is Argininosuccinate synthase.